The primary structure comprises 610 residues: Elongation factor 4 (610 aa).

The tr-type G domain maps to 13-195; it reads SHIRNFSIVA…AIVHKLPAPK (183 aa). GTP contacts are provided by residues 25–30 and 142–145; these read DHGKST and NKID.

It belongs to the TRAFAC class translation factor GTPase superfamily. Classic translation factor GTPase family. LepA subfamily.

It is found in the cell inner membrane. It catalyses the reaction GTP + H2O = GDP + phosphate + H(+). Required for accurate and efficient protein synthesis under certain stress conditions. May act as a fidelity factor of the translation reaction, by catalyzing a one-codon backward translocation of tRNAs on improperly translocated ribosomes. Back-translocation proceeds from a post-translocation (POST) complex to a pre-translocation (PRE) complex, thus giving elongation factor G a second chance to translocate the tRNAs correctly. Binds to ribosomes in a GTP-dependent manner. This chain is Elongation factor 4, found in Rhizobium etli (strain ATCC 51251 / DSM 11541 / JCM 21823 / NBRC 15573 / CFN 42).